Reading from the N-terminus, the 227-residue chain is Protein GrpE (227 aa).

Positions 1–18 (MTQGNQKTEGNPPEQVTV) are enriched in polar residues. Disordered stretches follow at residues 1 to 57 (MTQG…GAAT) and 193 to 227 (TEEG…ASGD). Over residues 19–35 (TDKRRIDPETGEVRHVP) the composition is skewed to basic and acidic residues. 2 stretches are compositionally biased toward low complexity: residues 41–50 (GGTAPQAATA) and 199–213 (EAAA…AAET).

The protein belongs to the GrpE family. As to quaternary structure, homodimer.

The protein localises to the cytoplasm. Its function is as follows. Participates actively in the response to hyperosmotic and heat shock by preventing the aggregation of stress-denatured proteins, in association with DnaK and GrpE. It is the nucleotide exchange factor for DnaK and may function as a thermosensor. Unfolded proteins bind initially to DnaJ; upon interaction with the DnaJ-bound protein, DnaK hydrolyzes its bound ATP, resulting in the formation of a stable complex. GrpE releases ADP from DnaK; ATP binding to DnaK triggers the release of the substrate protein, thus completing the reaction cycle. Several rounds of ATP-dependent interactions between DnaJ, DnaK and GrpE are required for fully efficient folding. The chain is Protein GrpE from Mycolicibacterium paratuberculosis (strain ATCC BAA-968 / K-10) (Mycobacterium paratuberculosis).